We begin with the raw amino-acid sequence, 125 residues long: MKLQKSKLHKNDQVLIISGKFKGRSGQIIAIDYKNETVKVRDINKVTKHVKPTQQKTEGGIETFEAGIHISNVALKFKTPKLKSKDKATSDTSITPLSAKEHTKIGYKIENNKKVRIAKRTGKSI.

Belongs to the universal ribosomal protein uL24 family. In terms of assembly, part of the 50S ribosomal subunit.

In terms of biological role, one of two assembly initiator proteins, it binds directly to the 5'-end of the 23S rRNA, where it nucleates assembly of the 50S subunit. Its function is as follows. One of the proteins that surrounds the polypeptide exit tunnel on the outside of the subunit. In Mycoplasma mobile (strain ATCC 43663 / 163K / NCTC 11711) (Mesomycoplasma mobile), this protein is Large ribosomal subunit protein uL24.